Reading from the N-terminus, the 84-residue chain is Small ribosomal subunit protein uS17 (84 aa).

This sequence belongs to the universal ribosomal protein uS17 family. Part of the 30S ribosomal subunit.

Its function is as follows. One of the primary rRNA binding proteins, it binds specifically to the 5'-end of 16S ribosomal RNA. The protein is Small ribosomal subunit protein uS17 of Salmonella typhi.